The chain runs to 433 residues: Serine--tRNA ligase (433 aa).

235–237 (TSE) is a binding site for L-serine. 266–268 (RSE) serves as a coordination point for ATP. L-serine is bound at residue E289. 353-356 (EISS) contacts ATP. S388 lines the L-serine pocket.

Belongs to the class-II aminoacyl-tRNA synthetase family. Type-1 seryl-tRNA synthetase subfamily. In terms of assembly, homodimer. The tRNA molecule binds across the dimer.

It is found in the cytoplasm. The catalysed reaction is tRNA(Ser) + L-serine + ATP = L-seryl-tRNA(Ser) + AMP + diphosphate + H(+). The enzyme catalyses tRNA(Sec) + L-serine + ATP = L-seryl-tRNA(Sec) + AMP + diphosphate + H(+). The protein operates within aminoacyl-tRNA biosynthesis; selenocysteinyl-tRNA(Sec) biosynthesis; L-seryl-tRNA(Sec) from L-serine and tRNA(Sec): step 1/1. Functionally, catalyzes the attachment of serine to tRNA(Ser). Is also able to aminoacylate tRNA(Sec) with serine, to form the misacylated tRNA L-seryl-tRNA(Sec), which will be further converted into selenocysteinyl-tRNA(Sec). The sequence is that of Serine--tRNA ligase from Burkholderia lata (strain ATCC 17760 / DSM 23089 / LMG 22485 / NCIMB 9086 / R18194 / 383).